The following is a 21-amino-acid chain: Magainin-B1 (21 aa).

Expressed by the skin glands.

It is found in the secreted. Functionally, has no antimicrobial activity against tested bacteria. The chain is Magainin-B1 from Xenopus borealis (Kenyan clawed frog).